The primary structure comprises 74 residues: Protein SOM1, mitochondrial (74 aa).

In terms of assembly, component of the mitochondrial inner membrane peptidase (IMP) complex which at least consists of IMP1, IMP2 and SOM1.

It is found in the mitochondrion inner membrane. In terms of biological role, non-catalytic component of the mitochondrial inner membrane peptidase (IMP) complex. IMP catalyzes the removal of signal peptides required for the targeting of proteins from the mitochondrial matrix, across the inner membrane, into the inter-membrane space. SOM1 facilitates cleavage of a subset of IMP substrates. This chain is Protein SOM1, mitochondrial (SOM1), found in Saccharomyces cerevisiae (strain ATCC 204508 / S288c) (Baker's yeast).